A 246-amino-acid chain; its full sequence is Adenosylcobinamide-GDP ribazoletransferase (246 aa).

6 helical membrane passes run 37–57, 64–84, 100–122, 139–159, 185–205, and 223–243; these read FPAVGLVIGAAVAGAAWAGAL, ALAALIVWVGVTGALHLDGLA, LLAVLADPHVGSFGVVAIVLQLL, ALVLVPFAARIGPLVWTWWLM, LAAAAWFTPALLVTPLLVLWW, and AGIELIETGLLLSVAITGLWI.

This sequence belongs to the CobS family. The cofactor is Mg(2+).

It is found in the cell inner membrane. It carries out the reaction alpha-ribazole + adenosylcob(III)inamide-GDP = adenosylcob(III)alamin + GMP + H(+). The catalysed reaction is alpha-ribazole 5'-phosphate + adenosylcob(III)inamide-GDP = adenosylcob(III)alamin 5'-phosphate + GMP + H(+). Its pathway is cofactor biosynthesis; adenosylcobalamin biosynthesis; adenosylcobalamin from cob(II)yrinate a,c-diamide: step 7/7. Its function is as follows. Joins adenosylcobinamide-GDP and alpha-ribazole to generate adenosylcobalamin (Ado-cobalamin). Also synthesizes adenosylcobalamin 5'-phosphate from adenosylcobinamide-GDP and alpha-ribazole 5'-phosphate. This is Adenosylcobinamide-GDP ribazoletransferase from Novosphingobium aromaticivorans (strain ATCC 700278 / DSM 12444 / CCUG 56034 / CIP 105152 / NBRC 16084 / F199).